The following is an 884-amino-acid chain: Alanine--tRNA ligase (884 aa).

Residues His-562, His-566, Cys-676, and His-680 each coordinate Zn(2+).

The protein belongs to the class-II aminoacyl-tRNA synthetase family. Zn(2+) is required as a cofactor.

Its subcellular location is the cytoplasm. The enzyme catalyses tRNA(Ala) + L-alanine + ATP = L-alanyl-tRNA(Ala) + AMP + diphosphate. Its function is as follows. Catalyzes the attachment of alanine to tRNA(Ala) in a two-step reaction: alanine is first activated by ATP to form Ala-AMP and then transferred to the acceptor end of tRNA(Ala). Also edits incorrectly charged Ser-tRNA(Ala) and Gly-tRNA(Ala) via its editing domain. In Jannaschia sp. (strain CCS1), this protein is Alanine--tRNA ligase.